Reading from the N-terminus, the 460-residue chain is Jacalin-related lectin 36 (460 aa).

The region spanning 1–131 (MAAATMSWDD…LNSIDVHFAP (131 aa)) is the Jacalin-type lectin 1 domain. N-acetylalanine is present on alanine 2. Disordered stretches follow at residues 34–57 (YDGDTHNPHHHGTPGKKSDGVSLS), 133–162 (PSSSSSSSSLSQANKVDAQGGKGGTSWDDG), and 291–334 (SGRG…PHEG). A compositionally biased stretch (low complexity) spans 133–143 (PSSSSSSSSLS). Positions 145–289 (ANKVDAQGGK…LNALGAYFAP (145 aa)) constitute a Jacalin-type lectin 2 domain. Polar residues predominate over residues 292–309 (GRGTPSATQPPGSAQPTG). In terms of domain architecture, Jacalin-type lectin 3 spans 313 to 457 (AKKLEAKGGN…IHQVGVHVKP (145 aa)).

The protein belongs to the jacalin lectin family.

This Arabidopsis thaliana (Mouse-ear cress) protein is Jacalin-related lectin 36 (JAL36).